The chain runs to 304 residues: Homoserine O-acetyltransferase (304 aa).

Cys-142 functions as the Acyl-thioester intermediate in the catalytic mechanism. Substrate contacts are provided by Lys-163 and Ser-192. Catalysis depends on His-235, which acts as the Proton acceptor. Residue Glu-237 is part of the active site. Arg-249 provides a ligand contact to substrate.

It belongs to the MetA family.

It localises to the cytoplasm. The enzyme catalyses L-homoserine + acetyl-CoA = O-acetyl-L-homoserine + CoA. It participates in amino-acid biosynthesis; L-methionine biosynthesis via de novo pathway; O-acetyl-L-homoserine from L-homoserine: step 1/1. Transfers an acetyl group from acetyl-CoA to L-homoserine, forming acetyl-L-homoserine. The polypeptide is Homoserine O-acetyltransferase (Clostridium beijerinckii (strain ATCC 51743 / NCIMB 8052) (Clostridium acetobutylicum)).